The following is a 313-amino-acid chain: MSSREIRIATRKSALALWQAEYVKARLEQAHPGLLVTLVPMVSRGDKLLDSPLSKIGGKGLFVKELETALLEDNADIAVHSMKDVPMDFPQGLGLFCICEREDPRDAFVSNTFESLDALPAGSIVGTSSLRRQAQLLARRPDLQIRFLRGNVNTRLAKLDAGEYNAIILAAAGLIRLGFEDRITSAISVDDSLPAGGQGAVGIECRSVDAEIHALLAPLHHEDTAVRVIAERSLNKHLNGGCQVPIACYAVLEGDDVWLRGLVGDPSGRVLLHADARAPQTSAQALGVQVAEALLAQGAAEILKAVYGEANNE.

The residue at position 242 (cysteine 242) is an S-(dipyrrolylmethanemethyl)cysteine.

It belongs to the HMBS family. Monomer. It depends on dipyrromethane as a cofactor.

The enzyme catalyses 4 porphobilinogen + H2O = hydroxymethylbilane + 4 NH4(+). The protein operates within porphyrin-containing compound metabolism; protoporphyrin-IX biosynthesis; coproporphyrinogen-III from 5-aminolevulinate: step 2/4. In terms of biological role, tetrapolymerization of the monopyrrole PBG into the hydroxymethylbilane pre-uroporphyrinogen in several discrete steps. This chain is Porphobilinogen deaminase, found in Pseudomonas syringae pv. tomato (strain ATCC BAA-871 / DC3000).